A 328-amino-acid polypeptide reads, in one-letter code: Aspartate carbamoyltransferase catalytic subunit (328 aa).

Residues Arg55 and Thr56 each contribute to the carbamoyl phosphate site. Lys83 serves as a coordination point for L-aspartate. 3 residues coordinate carbamoyl phosphate: Arg105, His135, and Gln138. Positions 176 and 230 each coordinate L-aspartate. Residues Gly271 and Pro272 each coordinate carbamoyl phosphate.

This sequence belongs to the aspartate/ornithine carbamoyltransferase superfamily. ATCase family. In terms of assembly, heterododecamer (2C3:3R2) of six catalytic PyrB chains organized as two trimers (C3), and six regulatory PyrI chains organized as three dimers (R2).

The catalysed reaction is carbamoyl phosphate + L-aspartate = N-carbamoyl-L-aspartate + phosphate + H(+). It functions in the pathway pyrimidine metabolism; UMP biosynthesis via de novo pathway; (S)-dihydroorotate from bicarbonate: step 2/3. Catalyzes the condensation of carbamoyl phosphate and aspartate to form carbamoyl aspartate and inorganic phosphate, the committed step in the de novo pyrimidine nucleotide biosynthesis pathway. The sequence is that of Aspartate carbamoyltransferase catalytic subunit from Streptomyces griseus subsp. griseus (strain JCM 4626 / CBS 651.72 / NBRC 13350 / KCC S-0626 / ISP 5235).